The following is a 735-amino-acid chain: Muskelin (735 aa).

Ala2 bears the N-acetylalanine mark. Residues 172–204 form the LisH domain; the sequence is REQEAIRLCLKHFRQHNYTEAFESLQKKTKIAL. Positions 206-258 constitute a CTLH domain; the sequence is HPMLTDMHDKLVLKGDFDACEELIEKAVNDGLFNQYISQQEYKPRWSQIIPKS. Kelch repeat units lie at residues 284 to 330, 339 to 391, 400 to 458, 469 to 515, 526 to 578, and 597 to 651; these read TVYL…SCHK, QIYT…FDHQ, MIYT…SRIG, CLYV…TGFT, EIHV…SLQE, and VHYL…AQMD. The segment at 701 to 735 is important for location in the cytosol; sequence DHTYAQRTQLFDTLVNFFPDSMTPPKGNLVDLITL.

In terms of assembly, homodimer; may form higher oligomers. Identified in the CTLH complex that contains GID4, RANBP9 and/or RANBP10, MKLN1, MAEA, RMND5A (or alternatively its paralog RMND5B), GID8, ARMC8, WDR26 and YPEL5. Within this complex, MAEA, RMND5A (or alternatively its paralog RMND5B), GID8, WDR26, and RANBP9 and/or RANBP10 form the catalytic core, while GID4, MKLN1, ARMC8 and YPEL5 have ancillary roles. Interacts with RANBP9. Part of a complex consisting of RANBP9, MKLN1 and GID8. Interacts with GABRA1. Interacts with the C-terminal tail of PTGER3. In terms of tissue distribution, detected in brain, especially in hippocampus and cerebellum (at protein level).

It localises to the cytoplasm. The protein resides in the cytosol. It is found in the nucleus. The protein localises to the nucleoplasm. Its subcellular location is the cell projection. It localises to the ruffle. The protein resides in the cell cortex. It is found in the synapse. The protein localises to the postsynapse. Functionally, component of the CTLH E3 ubiquitin-protein ligase complex that selectively accepts ubiquitin from UBE2H and mediates ubiquitination and subsequent proteasomal degradation of the transcription factor HBP1. Required for internalization of the GABA receptor GABRA1 from the cell membrane via endosomes and subsequent GABRA1 degradation. Acts as a mediator of cell spreading and cytoskeletal responses to the extracellular matrix component THBS1. The protein is Muskelin (Mkln1) of Mus musculus (Mouse).